The following is a 39-amino-acid chain: Photosystem II reaction center protein L (39 aa).

The helical transmembrane segment at 18–38 threads the bilayer; sequence SLYLGLLLVFVTGVLFSSYFF.

This sequence belongs to the PsbL family. As to quaternary structure, PSII is composed of 1 copy each of membrane proteins PsbA, PsbB, PsbC, PsbD, PsbE, PsbF, PsbH, PsbI, PsbJ, PsbK, PsbL, PsbM, PsbT, PsbX, PsbY, PsbZ, Psb30/Ycf12, peripheral proteins PsbO, CyanoQ (PsbQ), PsbU, PsbV and a large number of cofactors. It forms dimeric complexes.

Its subcellular location is the cellular thylakoid membrane. Its function is as follows. One of the components of the core complex of photosystem II (PSII). PSII is a light-driven water:plastoquinone oxidoreductase that uses light energy to abstract electrons from H(2)O, generating O(2) and a proton gradient subsequently used for ATP formation. It consists of a core antenna complex that captures photons, and an electron transfer chain that converts photonic excitation into a charge separation. This subunit is found at the monomer-monomer interface and is required for correct PSII assembly and/or dimerization. This is Photosystem II reaction center protein L from Synechococcus sp. (strain RCC307).